The sequence spans 221 residues: Sperm acrosome membrane-associated protein 3 (221 aa).

Residues 1–69 lie on the Cytoplasmic side of the membrane; that stretch reads MGICMSMYTQ…EARSRAPRRQ (69 aa). The chain crosses the membrane as a helical; Signal-anchor for type II membrane protein span at residues 70–90; that stretch reads LCPPGITWLALAYLLSCLLAS. Over 91–221 the chain is Extracellular; that stretch reads SKAKVFSRCE…LSDWVDGCDF (131 aa). Residues 94 to 221 form the C-type lysozyme domain; the sequence is KVFSRCELAK…LSDWVDGCDF (128 aa). 4 disulfides stabilise this stretch: Cys-99-Cys-219, Cys-123-Cys-207, Cys-157-Cys-172, and Cys-168-Cys-186.

It belongs to the glycosyl hydrolase 22 family. In terms of assembly, interacts with ASTL. As to expression, the processed form is expressed in sperm (at protein level). Expressed strongly in testis and epididymis and weakly in pancreas.

It localises to the cytoplasmic vesicle. The protein resides in the secretory vesicle. The protein localises to the acrosome membrane. Its subcellular location is the secreted. Its function is as follows. Sperm surface membrane protein that may be involved in sperm-egg plasma membrane adhesion and fusion during fertilization. It could be a potential receptor for the egg oligosaccharide residue N-acetylglucosamine, which is present in the extracellular matrix over the egg plasma membrane. The processed form has no detectable bacteriolytic activity in vitro. The polypeptide is Sperm acrosome membrane-associated protein 3 (Spaca3) (Mus musculus (Mouse)).